Here is a 232-residue protein sequence, read N- to C-terminus: Probable phospholipid hydroperoxide glutathione peroxidase 6, mitochondrial (232 aa).

The transit peptide at 1–54 (MLRSSIRLLYIRRTSPLLRSLSSSSSSSSSKRFDSAKPLFNSHRIISLPISTTG) directs the protein to the mitochondrion. The active site involves cysteine 105.

Belongs to the glutathione peroxidase family. Expressed at a low but detectable level in leaves, stems, and flowers, but at a higher level in siliques and even higher in roots. Predominantly expressed in seeds.

It is found in the mitochondrion. It catalyses the reaction a hydroperoxy polyunsaturated fatty acid + 2 glutathione = a hydroxy polyunsaturated fatty acid + glutathione disulfide + H2O. Its function is as follows. Protects cells and enzymes from oxidative damage, by catalyzing the reduction of hydrogen peroxide, lipid peroxides and organic hydroperoxide, by glutathione. The sequence is that of Probable phospholipid hydroperoxide glutathione peroxidase 6, mitochondrial (GPX6) from Arabidopsis thaliana (Mouse-ear cress).